Consider the following 265-residue polypeptide: Hydroxyethylthiazole kinase 2 (265 aa).

Position 39 (M39) interacts with substrate. ATP contacts are provided by K115 and T168. Residue G195 coordinates substrate.

This sequence belongs to the Thz kinase family. Mg(2+) is required as a cofactor.

The enzyme catalyses 5-(2-hydroxyethyl)-4-methylthiazole + ATP = 4-methyl-5-(2-phosphooxyethyl)-thiazole + ADP + H(+). It functions in the pathway cofactor biosynthesis; thiamine diphosphate biosynthesis; 4-methyl-5-(2-phosphoethyl)-thiazole from 5-(2-hydroxyethyl)-4-methylthiazole: step 1/1. Its function is as follows. Catalyzes the phosphorylation of the hydroxyl group of 4-methyl-5-beta-hydroxyethylthiazole (THZ). The chain is Hydroxyethylthiazole kinase 2 from Clostridium botulinum (strain ATCC 19397 / Type A).